A 286-amino-acid chain; its full sequence is ATP synthase gamma chain (286 aa).

Belongs to the ATPase gamma chain family. F-type ATPases have 2 components, CF(1) - the catalytic core - and CF(0) - the membrane proton channel. CF(1) has five subunits: alpha(3), beta(3), gamma(1), delta(1), epsilon(1). CF(0) has three main subunits: a, b and c.

The protein localises to the cell inner membrane. Produces ATP from ADP in the presence of a proton gradient across the membrane. The gamma chain is believed to be important in regulating ATPase activity and the flow of protons through the CF(0) complex. In Marinomonas sp. (strain MWYL1), this protein is ATP synthase gamma chain.